The primary structure comprises 476 residues: MKPILPDYSQSGVLVVGDVMLDRYWYGPTGRISPEAPVPVVKVENNEERPGGAANVAMNIASLGGHAHIVGLTGKDEPAEVLKNTLGALKVKCDFVELDDYPTITKLRVMSRGQQLIRLDFEDKFENTDPELVLSRMEQALPNVRSVILSDYAKGALEHVQSFIQKARAANVPVFIDPKGADFERYRGATLLTPNMAEFELVAGKVKSEDEMIEKGLALIEEFDFEALLVTRSEHGMTLLRKGVEPFHLPTQAKEVYDVTGAGDTVISVLAASVAAGKPLDEACALANAAAGVVVGKLGTSTLSTIELAEAIHGSQDTDYGVISEAALVEAVKRARAKGEKVVMTNGCFDILHAGHVSYMNHAAELGDRLIVAVNTDESVKRLKGPGRPVNPTDRRMAVLAGLGAVDWVVPFSEDTPQRLISEVLPSILVKGGDYKPEEIAGGAEVIAAGGEVKVLNFEDGCSTTEIIKAIKGGRG.

A ribokinase region spans residues 1–318 (MKPILPDYSQ…AEAIHGSQDT (318 aa)). An ATP-binding site is contributed by 195 to 198 (NMAE). Residue aspartate 264 is part of the active site. Residues 344-476 (MTNGCFDILH…IIKAIKGGRG (133 aa)) form a cytidylyltransferase region.

It in the N-terminal section; belongs to the carbohydrate kinase PfkB family. In the C-terminal section; belongs to the cytidylyltransferase family. In terms of assembly, homodimer.

The enzyme catalyses D-glycero-beta-D-manno-heptose 7-phosphate + ATP = D-glycero-beta-D-manno-heptose 1,7-bisphosphate + ADP + H(+). The catalysed reaction is D-glycero-beta-D-manno-heptose 1-phosphate + ATP + H(+) = ADP-D-glycero-beta-D-manno-heptose + diphosphate. It functions in the pathway nucleotide-sugar biosynthesis; ADP-L-glycero-beta-D-manno-heptose biosynthesis; ADP-L-glycero-beta-D-manno-heptose from D-glycero-beta-D-manno-heptose 7-phosphate: step 1/4. The protein operates within nucleotide-sugar biosynthesis; ADP-L-glycero-beta-D-manno-heptose biosynthesis; ADP-L-glycero-beta-D-manno-heptose from D-glycero-beta-D-manno-heptose 7-phosphate: step 3/4. Catalyzes the phosphorylation of D-glycero-D-manno-heptose 7-phosphate at the C-1 position to selectively form D-glycero-beta-D-manno-heptose-1,7-bisphosphate. Functionally, catalyzes the ADP transfer from ATP to D-glycero-beta-D-manno-heptose 1-phosphate, yielding ADP-D-glycero-beta-D-manno-heptose. In Vibrio atlanticus (strain LGP32) (Vibrio splendidus (strain Mel32)), this protein is Bifunctional protein HldE.